We begin with the raw amino-acid sequence, 860 residues long: Alanine--tRNA ligase (860 aa).

Zn(2+) contacts are provided by H553, H557, C655, and H659.

It belongs to the class-II aminoacyl-tRNA synthetase family. It depends on Zn(2+) as a cofactor.

Its subcellular location is the cytoplasm. The catalysed reaction is tRNA(Ala) + L-alanine + ATP = L-alanyl-tRNA(Ala) + AMP + diphosphate. In terms of biological role, catalyzes the attachment of alanine to tRNA(Ala) in a two-step reaction: alanine is first activated by ATP to form Ala-AMP and then transferred to the acceptor end of tRNA(Ala). Also edits incorrectly charged Ser-tRNA(Ala) and Gly-tRNA(Ala) via its editing domain. The chain is Alanine--tRNA ligase from Legionella pneumophila (strain Corby).